Reading from the N-terminus, the 508-residue chain is Cytochrome P450 monooxygenase pkfB (508 aa).

Residues 9 to 29 form a helical membrane-spanning segment; it reads FSLGLSQILVCLALLYAAIHI. N57 and N305 each carry an N-linked (GlcNAc...) asparagine glycan. Heme is bound at residue C450.

The protein belongs to the cytochrome P450 family. Heme serves as cofactor.

The protein resides in the membrane. It functions in the pathway secondary metabolite biosynthesis. Cytochrome P450 monooxygenase; part of the gene cluster that mediates the biosynthesis of aspernidine A, a prenylated isoindolinone. The starting point of the biosynthesis of aspernidin A is the production of orsellinaldehyde by the non-reducing polyketide synthase pkfA. Hydroxylation, methylation of one of the phenol groups, and prenylation, presumably catalyzed by the prenyltransferase pkfE, would be needed to yield aspernidine D. Subsequently, the cytochrome P450 monooxygenase pkfB is responsible for hydroxylation of aspernidine D to yield aspernidine E. The dehydrogenase pkfF may be responsible for further oxidation of aspernidine E to form a dialdehyde intermediate which is further transformed in a series of steps, some of which are enzyme-mediated, to generate aspernidine A. The possibility that additional enzymes outside of the cluster are involved in aspernidine A biosynthesis cannot be excluded. The protein is Cytochrome P450 monooxygenase pkfB of Emericella nidulans (strain FGSC A4 / ATCC 38163 / CBS 112.46 / NRRL 194 / M139) (Aspergillus nidulans).